The chain runs to 1013 residues: Prominin-like protein (1013 aa).

Residues 32–52 (IAYLAICGLSVAIFGFALATL) form a helical membrane-spanning segment. Residues asparagine 99 and asparagine 116 are each glycosylated (N-linked (GlcNAc...) asparagine). A run of 3 helical transmembrane segments spans residues 215-235 (CGICLLILIIGLIFGIIIAFV), 489-509 (VVSLIVCLLILLVLFILIFAL), and 535-555 (LLLAILLIFCVFSFIALVGLF). N-linked (GlcNAc...) asparagine glycosylation is found at asparagine 576, asparagine 618, asparagine 803, and asparagine 824. The helical transmembrane segment at 852-872 (INGFWVGILLCALLFLPILFV) threads the bilayer. Residues 918–1013 (ANVPKKRRKA…YYYPGASEQD (96 aa)) form a disordered region. Asparagine 949 carries N-linked (GlcNAc...) asparagine glycosylation. Residues 950–963 (RSGGDRGGGGGDGA) show a composition bias toward gly residues.

This sequence belongs to the prominin family.

Its subcellular location is the membrane. The protein is Prominin-like protein of Drosophila melanogaster (Fruit fly).